The following is a 277-amino-acid chain: Methyltransferase adrK (277 aa).

Residues 123 to 124 (DL), 150 to 151 (DV), and 151 to 152 (VL) each bind S-adenosyl-L-methionine.

This sequence belongs to the class I-like SAM-binding methyltransferase superfamily. Homodimer.

Its pathway is secondary metabolite biosynthesis; terpenoid biosynthesis. Its function is as follows. Methyltransferase; part of the gene cluster that mediates the biosynthesis of andrastins, meroterpenoid compounds that exhibit inhibitory activity against ras farnesyltransferase, suggesting that they could be promising leads for antitumor agents. The first step of the pathway is the synthesis of 3,5-dimethylorsellinic acid (DMOA) by the polyketide synthase adrD via condensation of one acetyl-CoA starter unit with 3 malonyl-CoA units and 2 methylations. DMAO is then converted to farnesyl-DMAO by the prenyltransferase adrG. The methyltransferase adrK catalyzes the methylation of the carboxyl group of farnesyl-DMAO to farnesyl-DMAO methyl ester which is further converted to epoxyfarnesyl-DMAO methyl ester by the FAD-dependent monooxygenase adrH. The terpene cyclase adrI then catalyzes the carbon skeletal rearrangement to generate the andrastin E, the first compound in the pathway having the andrastin scaffold, with the tetracyclic ring system. The post-cyclization tailoring enzymes adrF, adrE, adrJ, and adrA, are involved in the conversion of andrastin E into andrastin A. The short chain dehydrogenase adrF is responsible for the oxidation of the C-3 a hydroxyl group of andrastin E to yield the corresponding ketone, andrastin D. The ketoreductase adrE stereoselectively reduces the carbonyl moiety to reverse the stereochemistry of the C-3 position to yield andrastin F. The acetyltransferase adrJ is the acetyltransferase that attaches the acetyl group to the C-3 hydroxyl group of andrastin F to yield andrastin C. Finally, the cytochrome P450 monooxygenase adrA catalyzes two sequential oxidation reactions of the C-23 methyl group, to generate the corresponding alcohol andrastin B, and aldehyde andrastin A. This Penicillium rubens (strain ATCC 28089 / DSM 1075 / NRRL 1951 / Wisconsin 54-1255) (Penicillium chrysogenum) protein is Methyltransferase adrK.